A 266-amino-acid polypeptide reads, in one-letter code: 4-hydroxy-tetrahydrodipicolinate reductase (266 aa).

An NAD(+)-binding site is contributed by 10–15 (GPRGRM). Lysine 38 contacts NADP(+). NAD(+) contacts are provided by residues 99–101 (GTT) and 125–128 (APNF). The active-site Proton donor/acceptor is the histidine 155. A (S)-2,3,4,5-tetrahydrodipicolinate-binding site is contributed by histidine 156. Lysine 159 (proton donor) is an active-site residue. 165 to 166 (GT) is a binding site for (S)-2,3,4,5-tetrahydrodipicolinate.

Belongs to the DapB family.

It is found in the cytoplasm. It carries out the reaction (S)-2,3,4,5-tetrahydrodipicolinate + NAD(+) + H2O = (2S,4S)-4-hydroxy-2,3,4,5-tetrahydrodipicolinate + NADH + H(+). The catalysed reaction is (S)-2,3,4,5-tetrahydrodipicolinate + NADP(+) + H2O = (2S,4S)-4-hydroxy-2,3,4,5-tetrahydrodipicolinate + NADPH + H(+). The protein operates within amino-acid biosynthesis; L-lysine biosynthesis via DAP pathway; (S)-tetrahydrodipicolinate from L-aspartate: step 4/4. Catalyzes the conversion of 4-hydroxy-tetrahydrodipicolinate (HTPA) to tetrahydrodipicolinate. The chain is 4-hydroxy-tetrahydrodipicolinate reductase from Bacillus cereus (strain B4264).